The primary structure comprises 158 residues: Transcription elongation factor GreA (158 aa).

It belongs to the GreA/GreB family.

Necessary for efficient RNA polymerase transcription elongation past template-encoded arresting sites. The arresting sites in DNA have the property of trapping a certain fraction of elongating RNA polymerases that pass through, resulting in locked ternary complexes. Cleavage of the nascent transcript by cleavage factors such as GreA or GreB allows the resumption of elongation from the new 3'terminus. GreA releases sequences of 2 to 3 nucleotides. The protein is Transcription elongation factor GreA of Bacillus licheniformis (strain ATCC 14580 / DSM 13 / JCM 2505 / CCUG 7422 / NBRC 12200 / NCIMB 9375 / NCTC 10341 / NRRL NRS-1264 / Gibson 46).